Reading from the N-terminus, the 322-residue chain is Chromoplast-specific carotenoid-associated protein, chromoplastic (322 aa).

A chromoplast-targeting transit peptide spans methionine 1–arginine 58. The tract at residues glycine 67–glutamate 88 is disordered.

It belongs to the PAP/fibrillin family. As to expression, expressed in corollas. Not detected in fruits, stems, leaves, and roots.

It is found in the plastid. It localises to the chromoplast. May be involved in carotenoid sequestration within chromoplasts. This Cucumis sativus (Cucumber) protein is Chromoplast-specific carotenoid-associated protein, chromoplastic (CHRC).